The following is a 1323-amino-acid chain: Traf2 and NCK-interacting protein kinase (1323 aa).

Residues 25–289 (FELVELVGNG…TEQLMKHPFI (265 aa)) enclose the Protein kinase domain. ATP-binding positions include 31–39 (VGNGTYGQV) and lysine 54. The active-site Proton acceptor is the aspartate 153. Threonine 187 is subject to Phosphothreonine. 3 disordered regions span residues 284-347 (MKHP…LPGE), 397-559 (EQKE…LRPV), and 571-838 (SQGP…NEQY). Over residues 288–307 (FIRDQPNERQVRIQLKDHID) the composition is skewed to basic and acidic residues. Positions 290-1010 (RDQPNERQVR…EIRKYKKRFN (721 aa)) are mediates interaction with NEDD4. The segment covering 317-335 (DETEYEYSGSEEEEEENDS) has biased composition (acidic residues). Phosphoserine is present on residues serine 324 and serine 326. 3 stretches are compositionally biased toward basic and acidic residues: residues 397–470 (EQKE…ERDY), 477–494 (QRQEQRPLEKKPLYHYKE), and 503–513 (AWAKEVEERSR). Serine 531 and serine 541 each carry phosphoserine. Threonine 552 carries the post-translational modification Phosphothreonine. A phosphoserine mark is found at serine 571, serine 579, serine 581, and serine 611. Residues 623–640 (RIEKFDRSSWLRQEEDIP) are compositionally biased toward basic and acidic residues. Serine 649, serine 651, serine 659, serine 672, serine 678, serine 691, serine 735, serine 737, and serine 740 each carry phosphoserine. The segment covering 691–726 (SSLQRTSSGSSSSSSTPSSQPSSQGGSQPGSQAGSS) has biased composition (low complexity). 2 stretches are compositionally biased toward basic and acidic residues: residues 746–760 (EPSKVKPEESRDITR) and 772–790 (KELRELRIEETNRPLKKVT). Residues 797–810 (EESESSEEEEEDGE) are compositionally biased toward acidic residues. A Phosphoserine modification is found at serine 922. Positions 939–960 (FVDPRVYQTSPTDEDEEDDESS) are disordered. The span at 950 to 959 (TDEDEEDDES) shows a compositional bias: acidic residues. One can recognise a CNH domain in the interval 1010-1297 (NSEILCAALW…KFLCERNDKV (288 aa)).

The protein belongs to the protein kinase superfamily. STE Ser/Thr protein kinase family. STE20 subfamily. In terms of assembly, interacts (via the CNH domain) with RAP2A (GTP-bound form preferentially); the interaction is direct and required for the activation of TNIK by RAP2A. Interacts with NEDD4; recruits RAP2A to NEDD4. Interacts with TRAF2 and NCK. Interacts with TCF7L2/TCF4 and CTNNB1; the interaction is direct. Interacts with TANC1. In terms of processing, autophosphorylated. Autophosphorylation is activated by RAP2A and induces association to the cytoskeletal fraction.

It is found in the nucleus. It localises to the cytoplasm. The protein resides in the recycling endosome. Its subcellular location is the cytoskeleton. It carries out the reaction L-seryl-[protein] + ATP = O-phospho-L-seryl-[protein] + ADP + H(+). It catalyses the reaction L-threonyl-[protein] + ATP = O-phospho-L-threonyl-[protein] + ADP + H(+). Its function is as follows. Serine/threonine kinase that acts as an essential activator of the Wnt signaling pathway. Recruited to promoters of Wnt target genes and required to activate their expression. May act by phosphorylating TCF4/TCF7L2. Appears to act upstream of the JUN N-terminal pathway. May play a role in the response to environmental stress. Part of a signaling complex composed of NEDD4, RAP2A and TNIK which regulates neuronal dendrite extension and arborization during development. More generally, it may play a role in cytoskeletal rearrangements and regulate cell spreading. Phosphorylates SMAD1 on Thr-322. Activator of the Hippo signaling pathway which plays a pivotal role in organ size control and tumor suppression by restricting proliferation and promoting apoptosis. MAP4Ks act in parallel to and are partially redundant with STK3/MST2 and STK4/MST2 in the phosphorylation and activation of LATS1/2, and establish MAP4Ks as components of the expanded Hippo pathway. The chain is Traf2 and NCK-interacting protein kinase (Tnik) from Mus musculus (Mouse).